The primary structure comprises 110 residues: Phosphoribosyl-ATP pyrophosphatase (110 aa).

It belongs to the PRA-PH family.

It is found in the cytoplasm. It carries out the reaction 1-(5-phospho-beta-D-ribosyl)-ATP + H2O = 1-(5-phospho-beta-D-ribosyl)-5'-AMP + diphosphate + H(+). Its pathway is amino-acid biosynthesis; L-histidine biosynthesis; L-histidine from 5-phospho-alpha-D-ribose 1-diphosphate: step 2/9. This is Phosphoribosyl-ATP pyrophosphatase (hisE) from Azotobacter chroococcum mcd 1.